The following is a 291-amino-acid chain: 4-hydroxy-tetrahydrodipicolinate synthase (291 aa).

Residue Thr47 coordinates pyruvate. Catalysis depends on Tyr134, which acts as the Proton donor/acceptor. Lys162 (schiff-base intermediate with substrate) is an active-site residue. Ile205 contacts pyruvate.

It belongs to the DapA family. Homotetramer; dimer of dimers.

The protein localises to the cytoplasm. It catalyses the reaction L-aspartate 4-semialdehyde + pyruvate = (2S,4S)-4-hydroxy-2,3,4,5-tetrahydrodipicolinate + H2O + H(+). The protein operates within amino-acid biosynthesis; L-lysine biosynthesis via DAP pathway; (S)-tetrahydrodipicolinate from L-aspartate: step 3/4. In terms of biological role, catalyzes the condensation of (S)-aspartate-beta-semialdehyde [(S)-ASA] and pyruvate to 4-hydroxy-tetrahydrodipicolinate (HTPA). In Methanosphaerula palustris (strain ATCC BAA-1556 / DSM 19958 / E1-9c), this protein is 4-hydroxy-tetrahydrodipicolinate synthase.